The primary structure comprises 627 residues: RNA interference defective protein 10 (627 aa).

3 disordered regions span residues 1-31 (MSNH…VRQN), 467-487 (QRDT…HDQY), and 523-589 (SSVR…SEDY). 3 stretches are compositionally biased toward basic and acidic residues: residues 7–16 (NFRDYQREGI), 467–478 (QRDTDEQYDVHQ), and 526–537 (REPEHPSARSRD).

Belongs to the maelstrom family. Interacts with rde-11 (via RING-type zinc finger domain). Interacts with ergo-1.

In terms of biological role, in complex with rde-11, required in the endogenous and exogenous siRNA pathway for biogenesis and accumulation of secondary small interfering RNA (siRNA) intermediates, such as 22G-siRNAs derived from ergo-1 targets. This is RNA interference defective protein 10 from Caenorhabditis elegans.